Reading from the N-terminus, the 93-residue chain is uncharacterized protein (93 aa).

This is an uncharacterized protein from Saccharomyces cerevisiae (strain ATCC 204508 / S288c) (Baker's yeast).